The following is a 519-amino-acid chain: MIOREX complex component 12 (519 aa).

The transit peptide at 1-35 directs the protein to the mitochondrion; the sequence is MLRSLHSAATLSNKRFYSLISHSNRKNIIKKLLRH.

As to quaternary structure, associates with the mitochondrial ribosome.

It localises to the mitochondrion. Component of MIOREX complexes, large expressome-like assemblies of ribosomes with factors involved in all the steps of post-transcriptional gene expression. The protein is MIOREX complex component 12 of Saccharomyces cerevisiae (strain ATCC 204508 / S288c) (Baker's yeast).